We begin with the raw amino-acid sequence, 430 residues long: GTPase Obg (430 aa).

Residues 1–158 (MFVDQVKISL…LEVTLELKLL (158 aa)) form the Obg domain. A disordered region spans residues 118-145 (RGGRGGRGNSRFATPRNPAPDFSENGEP). An OBG-type G domain is found at 159–329 (ADVGLVGFPS…LLYQIADKLE (171 aa)). Residues 165-172 (GFPSVGKS), 190-194 (FTTIK), 212-215 (DLPG), 282-285 (NKMD), and 310-312 (STI) contribute to the GTP site. Ser-172 and Thr-192 together coordinate Mg(2+). One can recognise an OCT domain in the interval 352-430 (KHTPSADKFT…ILGGEFEFVE (79 aa)).

Belongs to the TRAFAC class OBG-HflX-like GTPase superfamily. OBG GTPase family. Monomer. Mg(2+) serves as cofactor.

The protein localises to the cytoplasm. An essential GTPase which binds GTP, GDP and possibly (p)ppGpp with moderate affinity, with high nucleotide exchange rates and a fairly low GTP hydrolysis rate. Plays a role in control of the cell cycle, stress response, ribosome biogenesis and in those bacteria that undergo differentiation, in morphogenesis control. This Staphylococcus epidermidis (strain ATCC 12228 / FDA PCI 1200) protein is GTPase Obg.